The following is a 986-amino-acid chain: Ephrin type-A receptor 4 (986 aa).

Positions 1 to 19 (MAGVPVGALLPLLVGVCGA) are cleaved as a signal peptide. Residues 20–547 (VTGSRVYPAN…PIIGDGTNPT (528 aa)) lie on the Extracellular side of the membrane. The Eph LBD domain occupies 30–209 (EVTLLDSRSV…FYKKCPLTVR (180 aa)). N-linked (GlcNAc...) asparagine glycans are attached at residues Asn235, Asn340, and Asn408. 2 consecutive Fibronectin type-III domains span residues 328-439 (PPSA…TNQA) and 440-537 (APSP…TVPS). The helical transmembrane segment at 548–569 (VLLVSVAGSVVLVVILIAAFVI) threads the bilayer. Topologically, residues 570-986 (SRRRSKYSKA…QQMHGRMVPV (417 aa)) are cytoplasmic. Phosphotyrosine; by autocatalysis occurs at positions 596 and 602. In terms of domain architecture, Protein kinase spans 621-882 (IKIEKVIGVG…QIVNMLDKLI (262 aa)). ATP contacts are provided by residues 627-635 (IGVGEFGEV) and Lys653. Residue Asp746 is the Proton acceptor of the active site. Residues Tyr779 and Tyr928 each carry the phosphotyrosine; by autocatalysis modification. The region spanning 911–975 (SAVVSVSDWL…LSSVQAMRSQ (65 aa)) is the SAM domain. A PDZ-binding motif is present at residues 984-986 (VPV).

It belongs to the protein kinase superfamily. Tyr protein kinase family. Ephrin receptor subfamily. Interacts with the src family kinase, p59-Fyn, through the major phosphorylation site at position Tyr-602. Interacts (via PDZ motif) with SIPA1L1 (via PDZ domain); controls neuronal morphology through regulation of the RAP1 (RAP1A or RAP1B) and RAP2 (RAP2A, RAP2B or RAP2C) GTPases. Expressed at high levels in brain, with expression also detected in the kidney, lung, muscle and thymus.

The protein resides in the cell membrane. It localises to the early endosome. It catalyses the reaction L-tyrosyl-[protein] + ATP = O-phospho-L-tyrosyl-[protein] + ADP + H(+). Receptor tyrosine kinase which binds membrane-bound ephrin family ligands residing on adjacent cells, leading to contact-dependent bidirectional signaling into neighboring cells. The signaling pathway downstream of the receptor is referred to as forward signaling while the signaling pathway downstream of the ephrin ligand is referred to as reverse signaling. Highly promiscuous, it has the unique property among Eph receptors to bind and to be physiologically activated by both GPI-anchored ephrin-A and transmembrane ephrin-B ligands including EFNA1 and EFNB3. Upon activation by ephrin ligands, modulates cell morphology and integrin-dependent cell adhesion through regulation of the Rac, Rap and Rho GTPases activity. Plays an important role in the development of the nervous system controlling different steps of axonal guidance including the establishment of the corticospinal projections. The sequence is that of Ephrin type-A receptor 4 (EPHA4) from Gallus gallus (Chicken).